We begin with the raw amino-acid sequence, 603 residues long: Extracellular basic protease (603 aa).

The first 21 residues, methionine 1–alanine 21, serve as a signal peptide directing secretion. Positions glycine 22–lysine 132 are excised as a propeptide. In terms of domain architecture, Peptidase S8 spans glutamine 143–valine 468. Residue aspartate 173 is the Charge relay system of the active site. The tract at residues proline 197 to cysteine 221 is disordered. Cystine bridges form between cysteine 221-cysteine 273 and cysteine 315-cysteine 352. Histidine 237 acts as the Charge relay system in catalysis. Residue serine 409 is the Charge relay system of the active site. Residues arginine 477–phenylalanine 603 constitute a propeptide that is removed on maturation. The region spanning alanine 478–phenylalanine 603 is the P/Homo B domain.

It belongs to the peptidase S8 family.

The protein resides in the secreted. This chain is Extracellular basic protease (bprV), found in Dichelobacter nodosus (Bacteroides nodosus).